The chain runs to 95 residues: Protein TusB (95 aa).

It belongs to the DsrH/TusB family. As to quaternary structure, heterohexamer, formed by a dimer of trimers. The hexameric TusBCD complex contains 2 copies each of TusB, TusC and TusD. The TusBCD complex interacts with TusE.

The protein localises to the cytoplasm. In terms of biological role, part of a sulfur-relay system required for 2-thiolation of 5-methylaminomethyl-2-thiouridine (mnm(5)s(2)U) at tRNA wobble positions. This chain is Protein TusB, found in Buchnera aphidicola subsp. Acyrthosiphon pisum (strain 5A).